Consider the following 187-residue polypeptide: Ribosome-recycling factor (187 aa).

The protein belongs to the RRF family.

The protein resides in the cytoplasm. In terms of biological role, responsible for the release of ribosomes from messenger RNA at the termination of protein biosynthesis. May increase the efficiency of translation by recycling ribosomes from one round of translation to another. This chain is Ribosome-recycling factor, found in Rhodopseudomonas palustris (strain HaA2).